A 555-amino-acid polypeptide reads, in one-letter code: Formate--tetrahydrofolate ligase (555 aa).

65–72 (TPAGEGKS) is an ATP binding site.

It belongs to the formate--tetrahydrofolate ligase family.

It catalyses the reaction (6S)-5,6,7,8-tetrahydrofolate + formate + ATP = (6R)-10-formyltetrahydrofolate + ADP + phosphate. It functions in the pathway one-carbon metabolism; tetrahydrofolate interconversion. The sequence is that of Formate--tetrahydrofolate ligase from Staphylococcus aureus (strain MRSA252).